The sequence spans 476 residues: Bifunctional protein HldE (476 aa).

The segment at 1–319 (MKVSLPAFEK…EALALHHGES (319 aa)) is ribokinase. 195 to 198 (NMSE) contributes to the ATP binding site. Aspartate 264 is a catalytic residue. The interval 345–476 (MTNGCFDILH…AIIQNIMAKQ (132 aa)) is cytidylyltransferase.

It in the N-terminal section; belongs to the carbohydrate kinase PfkB family. This sequence in the C-terminal section; belongs to the cytidylyltransferase family. In terms of assembly, homodimer.

The enzyme catalyses D-glycero-beta-D-manno-heptose 7-phosphate + ATP = D-glycero-beta-D-manno-heptose 1,7-bisphosphate + ADP + H(+). The catalysed reaction is D-glycero-beta-D-manno-heptose 1-phosphate + ATP + H(+) = ADP-D-glycero-beta-D-manno-heptose + diphosphate. It participates in nucleotide-sugar biosynthesis; ADP-L-glycero-beta-D-manno-heptose biosynthesis; ADP-L-glycero-beta-D-manno-heptose from D-glycero-beta-D-manno-heptose 7-phosphate: step 1/4. Its pathway is nucleotide-sugar biosynthesis; ADP-L-glycero-beta-D-manno-heptose biosynthesis; ADP-L-glycero-beta-D-manno-heptose from D-glycero-beta-D-manno-heptose 7-phosphate: step 3/4. Catalyzes the phosphorylation of D-glycero-D-manno-heptose 7-phosphate at the C-1 position to selectively form D-glycero-beta-D-manno-heptose-1,7-bisphosphate. Functionally, catalyzes the ADP transfer from ATP to D-glycero-beta-D-manno-heptose 1-phosphate, yielding ADP-D-glycero-beta-D-manno-heptose. The protein is Bifunctional protein HldE of Shewanella sp. (strain MR-4).